The primary structure comprises 889 residues: Alanine--tRNA ligase (889 aa).

Zn(2+)-binding residues include H569, H573, C671, and H675.

This sequence belongs to the class-II aminoacyl-tRNA synthetase family. Requires Zn(2+) as cofactor.

Its subcellular location is the cytoplasm. The enzyme catalyses tRNA(Ala) + L-alanine + ATP = L-alanyl-tRNA(Ala) + AMP + diphosphate. Catalyzes the attachment of alanine to tRNA(Ala) in a two-step reaction: alanine is first activated by ATP to form Ala-AMP and then transferred to the acceptor end of tRNA(Ala). Also edits incorrectly charged Ser-tRNA(Ala) and Gly-tRNA(Ala) via its editing domain. This chain is Alanine--tRNA ligase, found in Synechococcus sp. (strain CC9605).